The primary structure comprises 49 residues: Large ribosomal subunit protein bL33A (49 aa).

It belongs to the bacterial ribosomal protein bL33 family.

The chain is Large ribosomal subunit protein bL33A from Bacillus cytotoxicus (strain DSM 22905 / CIP 110041 / 391-98 / NVH 391-98).